A 71-amino-acid polypeptide reads, in one-letter code: Conotoxin Bu23 (71 aa).

The first 21 residues, 1–21 (MGMRMMVTVFLLGVLATTVVS), serve as a signal peptide directing secretion. The propeptide occupies 22-37 (LRSNRASDGRRGIVNK). Asparagine 70 carries the post-translational modification Asparagine amide.

The protein belongs to the conotoxin A superfamily. Contains 3 disulfide bonds. They are not indicated here, since framework IV presents two different connectivities (I-V, II-III, IV-VI and I-III, II-V, IV-VI). Expressed by the venom duct.

The protein localises to the secreted. This chain is Conotoxin Bu23, found in Conus bullatus (Bubble cone).